The sequence spans 776 residues: Kinesin-like protein KLP1 (776 aa).

The Kinesin motor domain occupies 5 to 335 (AVKVFVRTRP…LRFASRVRTL (331 aa)). Residue 91–98 (GQTGAGKT) participates in ATP binding. The stretch at 348 to 371 (ALLLRRYERQIKELKAELAMRDTL) forms a coiled coil. Positions 441–535 (RRATEEGSGA…SNWGDAGPLS (95 aa)) are disordered. The segment covering 447-460 (GSGAAARGGDSAGP) has biased composition (low complexity). Positions 579–657 (ALADTKASIR…SLKSAREELE (79 aa)) form a coiled coil. The segment at 658–776 (PQIQAVAVAR…TQAVNRGLAR (119 aa)) is globular.

Belongs to the TRAFAC class myosin-kinesin ATPase superfamily. Kinesin family.

It localises to the cytoplasm. The protein localises to the cytoskeleton. It is found in the flagellum axoneme. Its function is as follows. May play a role in rotation or twisting of the central pair microtubules of the flagella axoneme. The protein is Kinesin-like protein KLP1 (KLP1) of Chlamydomonas reinhardtii (Chlamydomonas smithii).